Here is a 627-residue protein sequence, read N- to C-terminus: 1-deoxy-D-xylulose-5-phosphate synthase (627 aa).

Thiamine diphosphate-binding positions include His-87 and 128–130 (GHS). Position 159 (Asp-159) interacts with Mg(2+). Residues 160-161 (GA), Asn-188, Phe-295, and Glu-375 contribute to the thiamine diphosphate site. Mg(2+) is bound at residue Asn-188.

The protein belongs to the transketolase family. DXPS subfamily. As to quaternary structure, homodimer. Requires Mg(2+) as cofactor. Thiamine diphosphate is required as a cofactor.

The catalysed reaction is D-glyceraldehyde 3-phosphate + pyruvate + H(+) = 1-deoxy-D-xylulose 5-phosphate + CO2. It functions in the pathway metabolic intermediate biosynthesis; 1-deoxy-D-xylulose 5-phosphate biosynthesis; 1-deoxy-D-xylulose 5-phosphate from D-glyceraldehyde 3-phosphate and pyruvate: step 1/1. Catalyzes the acyloin condensation reaction between C atoms 2 and 3 of pyruvate and glyceraldehyde 3-phosphate to yield 1-deoxy-D-xylulose-5-phosphate (DXP). This is 1-deoxy-D-xylulose-5-phosphate synthase from Pseudomonas aeruginosa (strain LESB58).